The sequence spans 195 residues: Probable septum site-determining protein MinC (195 aa).

This sequence belongs to the MinC family. As to quaternary structure, interacts with MinD and FtsZ.

Its function is as follows. Cell division inhibitor that blocks the formation of polar Z ring septums. Rapidly oscillates between the poles of the cell to destabilize FtsZ filaments that have formed before they mature into polar Z rings. Prevents FtsZ polymerization. The sequence is that of Probable septum site-determining protein MinC from Helicobacter pylori (strain G27).